Here is a 1395-residue protein sequence, read N- to C-terminus: MLLPLPPQSSKPVPKKSQSSKIVPSHHDPSEKTGENCQTKISPSSLQESPSSLQGALKKRSAFEDLTNASQCQPVQPKKEANKEFVKVVSKKINRNTHALGLAKKNKRNLKWHKLEVTPVVASTTVVPNIMEKPLILDISTTSKTPNTEEASLFRKPLVLKEEPTIEDETLINKSLSLKKCSNHEEVSLLEKLQPLQEESDSDDAFVIEPMTFKKTHKTEEAAITKKTLSLKKKMCASQRKQSCQEESLAVQDVNMEEDSFFMESMSFKKKPKTEESIPTHKLSSLKKKCTIYGKICHFRKPPVLQTTICGAMSSIKKPTTEKETLFQELSVLQEKHTTEHEMSILKKSLALQKTNFKEDSLVKESLAFKKKPSTEEAIMMPVILKEQCMTEGKRSRLKPLVLQEITSGEKSLIMKPLSIKEKPSTEKESFSQEPSALQKKHTTQEEVSILKEPSSLLKSPTEESPFDEALAFTKKCTIEEAPPTKKPLILKRKHATQGTMSHLKKPLILQTTSGEKSLIKEPLPFKEEKVSLKKKCTTQEMMSICPELLDFQDMIGEDKNSFFMEPMSFRKNPTTEETVLTKTSLSLQEKKITQGKMSHLKKPLVLQKITSEEESFYKKLLPFKMKSTTEEKFLSQEPSALKEKHTTLQEVSLSKESLAIQEKATTEEEFSQELFSLHVKHTNKSGSLFQEALVLQEKTDAEEDSLKNLLALQEKSTMEEESLINKLLALKEELSAEAATNIQTQLSLKKKSTSHGKVFFLKKQLALNETINEEEFLNKQPLALEGYPSIAEGETLFKKLLAMQEEPSIEKEAVLKEPTIDTEAHFKEPLALQEEPSTEKEAVLKEPSVDTEAHFKETLALQEKPSIEQEALFKRHSALWEKPSTEKETIFKESLDLQEKPSIKKETLLKKPLALKMSTINEAVLFEDMIALNEKPTTGKELSFKEPLALQESPTYKEDTFLKTLLVPQVGTSPNVSSTAPESITSKSSIATMTSVGKSGTINEAFLFEDMITLNEKPTTGKELSFKEPLALQESPTCKEDTFLETFLIPQIGTSPYVFSTTPESITEKSSIATMTSVGKSRTTTESSACESASDKPVSPQAKGTPKEITPREDIDEDSSDPSFNPMYAKEIFSYMKEREEQFILTDYMNRQIEITSDMRAILVDWLVEVQVSFEMTHETLYLAVKLVDLYLMKAVCKKDKLQLLGATAFMIAAKFEEHNSPRVDDFVYICDDNYQRSEVLSMEINILNVLKCDINIPIAYHFLRRYARCIHTNMKTLTLSRYICEMTLQEYHYVQEKASKLAAASLLLALYMKKLGYWVPFLEHYSGYSISELHPLVRQLNKLLTFSSYDSLKAVYYKYSHPVFFEVAKIPALDMLKLEEILNCDCEAQGLVL.

A disordered region spans residues Met1–Lys59. The span at Ser10–Val23 shows a compositional bias: low complexity. A compositionally biased stretch (basic and acidic residues) spans Ser25–Gly34. Residues Ser42–Gln54 are compositionally biased toward low complexity. A D-box motif is present at residues Arg60–Asn68. 2 disordered regions span residues Leu418 to Glu464 and Ala1074 to Asp1122. The span at Ser419–Phe431 shows a compositional bias: basic and acidic residues. Residues Ser1082 to Ser1093 show a composition bias toward low complexity.

It belongs to the cyclin family. Cyclin AB subfamily. In terms of assembly, interacts with CDK2 kinase. In terms of processing, ubiquitinated. Ubiquitination leads to its degradation during anaphase entry, after degradation of CCNB1. As to expression, testis specific. In testis, it is expressed in developing germ cells, but not in Leydig cells. Weakly or not expressed in other tissues.

The protein localises to the nucleus. Its function is as follows. Cyclins are positive regulatory subunits of the cyclin-dependent kinases (CDKs), and thereby play an essential role in the control of the cell cycle, notably via their destruction during cell division. Its tissue specificity suggest that it may be required during early meiotic prophase I. The sequence is that of G2/mitotic-specific cyclin-B3 (CCNB3) from Homo sapiens (Human).